Here is a 119-residue protein sequence, read N- to C-terminus: Flagellar transcriptional regulator FlhD (119 aa).

Belongs to the FlhD family. As to quaternary structure, homodimer; disulfide-linked. Forms a heterohexamer composed of two FlhC and four FlhD subunits. Each FlhC binds a FlhD dimer, forming a heterotrimer, and a hexamer assembles by dimerization of two heterotrimers.

Its subcellular location is the cytoplasm. Functionally, functions in complex with FlhC as a master transcriptional regulator that regulates transcription of several flagellar and non-flagellar operons by binding to their promoter region. Activates expression of class 2 flagellar genes, including fliA, which is a flagellum-specific sigma factor that turns on the class 3 genes. Also regulates genes whose products function in a variety of physiological pathways. The sequence is that of Flagellar transcriptional regulator FlhD from Pectobacterium atrosepticum (strain SCRI 1043 / ATCC BAA-672) (Erwinia carotovora subsp. atroseptica).